The sequence spans 707 residues: Protein O-mannosyl-transferase TMEM260 (707 aa).

A run of 8 helical transmembrane segments spans residues 28 to 48 (GGVA…PPSV), 71 to 91 (YPLF…GSIA), 94 to 114 (VNLL…FTVF), 141 to 161 (IAAE…ALTV), 189 to 209 (NQHT…FQLL), 222 to 242 (LSLY…SSYL), 318 to 338 (NPSL…FFAW), and 356 to 376 (FWMQ…AAVV). The Lumenal segment spans residues 377–707 (SETNRVLNSN…LQSLRNRKNV (331 aa)). Asparagine 407, asparagine 535, and asparagine 568 each carry an N-linked (GlcNAc...) asparagine glycan.

Belongs to the glycosyltransferase 117 (GT117) family. As to expression, expressed in brain, heart, kidney, liver, lung, pancreas and placenta but are not detected in skeletal muscle.

It is found in the endoplasmic reticulum membrane. The protein resides in the membrane. The catalysed reaction is a di-trans,poly-cis-dolichyl beta-D-mannosyl phosphate + L-seryl-[protein] = 3-O-(alpha-D-mannosyl)-L-seryl-[protein] + a di-trans,poly-cis-dolichyl phosphate + H(+). It carries out the reaction a di-trans,poly-cis-dolichyl beta-D-mannosyl phosphate + L-threonyl-[protein] = 3-O-(alpha-D-mannosyl)-L-threonyl-[protein] + a di-trans,poly-cis-dolichyl phosphate + H(+). Its function is as follows. O-mannosyl-transferase that transfers mannosyl residues to the hydroxyl group of serine or threonine residues of proteins. Specifically glycosylates the IPT/TIG domain of target proteins, such as MET and MST1R/RON. TMEM260-mediated O-mannosylated residues are composed of single mannose glycans that are not elongated or modified. The chain is Protein O-mannosyl-transferase TMEM260 from Homo sapiens (Human).